Reading from the N-terminus, the 333-residue chain is Holliday junction branch migration complex subunit RuvB (333 aa).

The interval 1-181 is large ATPase domain (RuvB-L); sequence MNDILNKEPM…FGISSHMEYY (181 aa). ATP is bound by residues L20, R21, G62, K65, T66, T67, 128 to 130, R171, Y181, and R218; that span reads EDF. T66 serves as a coordination point for Mg(2+). Residues 182–252 are small ATPAse domain (RuvB-S); sequence QERDLEEIVK…ITDKALTILD (71 aa). Positions 255-333 are head domain (RuvB-H); the sequence is AAGLDYIDQK…HLGYVYNEEE (79 aa). DNA is bound by residues R291, R310, and R315.

This sequence belongs to the RuvB family. Homohexamer. Forms an RuvA(8)-RuvB(12)-Holliday junction (HJ) complex. HJ DNA is sandwiched between 2 RuvA tetramers; dsDNA enters through RuvA and exits via RuvB. An RuvB hexamer assembles on each DNA strand where it exits the tetramer. Each RuvB hexamer is contacted by two RuvA subunits (via domain III) on 2 adjacent RuvB subunits; this complex drives branch migration. In the full resolvosome a probable DNA-RuvA(4)-RuvB(12)-RuvC(2) complex forms which resolves the HJ.

It localises to the cytoplasm. The enzyme catalyses ATP + H2O = ADP + phosphate + H(+). Functionally, the RuvA-RuvB-RuvC complex processes Holliday junction (HJ) DNA during genetic recombination and DNA repair, while the RuvA-RuvB complex plays an important role in the rescue of blocked DNA replication forks via replication fork reversal (RFR). RuvA specifically binds to HJ cruciform DNA, conferring on it an open structure. The RuvB hexamer acts as an ATP-dependent pump, pulling dsDNA into and through the RuvAB complex. RuvB forms 2 homohexamers on either side of HJ DNA bound by 1 or 2 RuvA tetramers; 4 subunits per hexamer contact DNA at a time. Coordinated motions by a converter formed by DNA-disengaged RuvB subunits stimulates ATP hydrolysis and nucleotide exchange. Immobilization of the converter enables RuvB to convert the ATP-contained energy into a lever motion, pulling 2 nucleotides of DNA out of the RuvA tetramer per ATP hydrolyzed, thus driving DNA branch migration. The RuvB motors rotate together with the DNA substrate, which together with the progressing nucleotide cycle form the mechanistic basis for DNA recombination by continuous HJ branch migration. Branch migration allows RuvC to scan DNA until it finds its consensus sequence, where it cleaves and resolves cruciform DNA. This Lactococcus lactis subsp. cremoris (strain SK11) protein is Holliday junction branch migration complex subunit RuvB.